The following is a 58-amino-acid chain: U11-ctenitoxin-Pn1b (58 aa).

5 cysteine pairs are disulfide-bonded: Cys-2–Cys-16, Cys-9–Cys-22, Cys-15–Cys-40, Cys-24–Cys-38, and Cys-48–Cys-55.

In terms of tissue distribution, expressed by the venom gland.

It is found in the secreted. In terms of biological role, non-toxic to mice. This is U11-ctenitoxin-Pn1b from Phoneutria nigriventer (Brazilian armed spider).